Consider the following 641-residue polypeptide: WW domain-binding protein 11 (641 aa).

The span at 1 to 11 (MGRRSTSSTKS) shows a compositional bias: polar residues. Residues 1-37 (MGRRSTSSTKSGKFMNPTDQARKEARKRELKKNKKQR) form a disordered region. The required for nuclear import stretch occupies residues 1–45 (MGRRSTSSTKSGKFMNPTDQARKEARKRELKKNKKQRMMVRAAVL). Residue K13 is modified to N6-acetyllysine. Over residues 28–37 (RELKKNKKQR) the composition is skewed to basic residues. A coiled-coil region spans residues 75–133 (EKVLKDKRKKLRETFERILRLYEKENPDIYKELRKLEVEYEQKRAQLSQYFDAVKNAQH). S181 carries the phosphoserine modification. The disordered stretch occupies residues 186-213 (LGHGVPRLPPGRKPPGPPPGPPPPQVLQ). The residue at position 192 (R192) is an Omega-N-methylarginine. The span at 192–210 (RLPPGRKPPGPPPGPPPPQ) shows a compositional bias: pro residues. The segment at 217 to 221 (RKVGF) is interaction with PP1. The residue at position 236 (Y236) is a Phosphotyrosine. The segment at 236-549 (YSPELAQRGH…LIQRPKADDA (314 aa)) is disordered. Residue S237 is modified to Phosphoserine. Acidic residues predominate over residues 253–263 (SEDDGYPEDMD). Residues 276–304 (TDRSDAESDGDEFGHRDDSERDNTEEKKS) show a composition bias toward basic and acidic residues. 2 positions are modified to phosphoserine: S279 and S283. The interval 306–310 (LSVRF) is interaction with PP1. A compositionally biased stretch (acidic residues) spans 351–365 (EFSEEEDDDDSEDSE). Phosphoserine is present on residues S353, S361, and S364. Over residues 366 to 380 (AEKPSQKQHKEDSHA) the composition is skewed to basic and acidic residues. Over residues 381–404 (DGSSAASSQQQAPPQAVPPSQIQA) the composition is skewed to low complexity. 3 stretches are compositionally biased toward pro residues: residues 405–447 (PPMP…PPGM), 456–504 (RLLP…PPRP), and 510–530 (PLVP…PLPN). The PGR motif lies at 455-466 (PRLLPPGPPPGR). A Glycyl lysine isopeptide (Lys-Gly) (interchain with G-Cter in SUMO2) cross-link involves residue K557. K565 is modified (N6-acetyllysine). A Glycyl lysine isopeptide (Lys-Gly) (interchain with G-Cter in SUMO2) cross-link involves residue K572. Residues 588–623 (ENKGATAVPQRRSEEDSAVPVAKAAPRSGPSVPVSV) form a disordered region. S600 bears the Phosphoserine mark.

In terms of assembly, interacts with PPP1CA, PPP1CB and PPP1CC. Interacts via the PGR motif with PQBP1 in the nucleus. Interacts with the WW domains of WBP4.

It localises to the nucleus. Its subcellular location is the cytoplasm. Its function is as follows. Activates pre-mRNA splicing. May inhibit PP1 phosphatase activity. In Rattus norvegicus (Rat), this protein is WW domain-binding protein 11 (Wbp11).